Consider the following 621-residue polypeptide: Methionine--tRNA ligase (621 aa).

The 'HIGH' region motif lies at 11–21 (PYANGPRHIGH). The Zn(2+) site is built by Cys-143, Cys-146, Cys-156, and Cys-159. Positions 347–351 (KFSSS) match the 'KMSKS' region motif. Ser-350 lines the ATP pocket.

This sequence belongs to the class-I aminoacyl-tRNA synthetase family. MetG type 1 subfamily. As to quaternary structure, monomer. Requires Zn(2+) as cofactor.

The protein resides in the cytoplasm. The catalysed reaction is tRNA(Met) + L-methionine + ATP = L-methionyl-tRNA(Met) + AMP + diphosphate. In terms of biological role, is required not only for elongation of protein synthesis but also for the initiation of all mRNA translation through initiator tRNA(fMet) aminoacylation. In Bifidobacterium longum subsp. infantis (strain ATCC 15697 / DSM 20088 / JCM 1222 / NCTC 11817 / S12), this protein is Methionine--tRNA ligase.